The chain runs to 239 residues: Ribonuclease HII (239 aa).

Residues 30–221 (GPVAGVDEVG…VRRLVTAGTP (192 aa)) enclose the RNase H type-2 domain. Positions 36, 37, and 130 each coordinate a divalent metal cation.

This sequence belongs to the RNase HII family. The cofactor is Mn(2+). Requires Mg(2+) as cofactor.

It is found in the cytoplasm. The enzyme catalyses Endonucleolytic cleavage to 5'-phosphomonoester.. Its function is as follows. Endonuclease that specifically degrades the RNA of RNA-DNA hybrids. The sequence is that of Ribonuclease HII from Mycobacterium sp. (strain JLS).